We begin with the raw amino-acid sequence, 425 residues long: MTEYNGYVTDETIEGADDGPLAGKTVAVKDNISTEGVRTTCGSAMLEDYVPPYDATVVERLKDAGATIPGKTNMDEFGMGTTTETSAFGAVENPAAEGRVPGGSSGGSAAVVAAGDADLALGSDTGGSIRCPAAFCGVVGIKPTYGLVSRYGLIAYANSLEQIGPIAPSVEGAAELLDVIAGPDEHDATTQEAPEADGSYAAAADGDVDGLSIGVPTELLDGADEAVVETFWDAMDDLEAQGASYHEVDLPSVEHAVEAYYVIAMSEASSNLARFDGVRYGQSGGYDGNWNESFANAREQGFGEEVKRRILLGTYALSAGYHDKYYKKAQDARAWVKQDFDEALDDADVLASPTMPVPPMKRGESLDDPLTMYLADANTTPVNLANLPAISVPAGETDDGLPVGLQLVGPAFGERQIIRAGSALA.

Residues Lys-29 and Ser-104 each act as charge relay system in the active site. Ser-128 serves as the catalytic Acyl-ester intermediate.

This sequence belongs to the amidase family. GatA subfamily. As to quaternary structure, heterotrimer of A, B and C subunits.

The catalysed reaction is L-glutamyl-tRNA(Gln) + L-glutamine + ATP + H2O = L-glutaminyl-tRNA(Gln) + L-glutamate + ADP + phosphate + H(+). In terms of biological role, allows the formation of correctly charged Gln-tRNA(Gln) through the transamidation of misacylated Glu-tRNA(Gln) in organisms which lack glutaminyl-tRNA synthetase. The reaction takes place in the presence of glutamine and ATP through an activated gamma-phospho-Glu-tRNA(Gln). The chain is Glutamyl-tRNA(Gln) amidotransferase subunit A from Haloarcula marismortui (strain ATCC 43049 / DSM 3752 / JCM 8966 / VKM B-1809) (Halobacterium marismortui).